The primary structure comprises 119 residues: Large ribosomal subunit protein bL20 (119 aa).

The protein belongs to the bacterial ribosomal protein bL20 family.

Its function is as follows. Binds directly to 23S ribosomal RNA and is necessary for the in vitro assembly process of the 50S ribosomal subunit. It is not involved in the protein synthesizing functions of that subunit. The protein is Large ribosomal subunit protein bL20 of Levilactobacillus brevis (strain ATCC 367 / BCRC 12310 / CIP 105137 / JCM 1170 / LMG 11437 / NCIMB 947 / NCTC 947) (Lactobacillus brevis).